The chain runs to 330 residues: (11Z)-hexadec-11-enoyl-CoA conjugase (330 aa).

A run of 2 helical transmembrane segments spans residues 37-57 (IVVM…YGLY) and 65-85 (LATS…ITAG). A Histidine box-1 motif is present at residues 87–92 (HRLWSH). The chain crosses the membrane as a helical span at residues 101-121 (LEILLMVFNSIAFQNTIFTWV). The Histidine box-2 motif lies at 124 to 128 (HRLHH). Transmembrane regions (helical) follow at residues 185–205 (AIPF…MYFW) and 216–238 (TVLR…HLWG). The short motif at 264–268 (HNYHH) is the Histidine box-3 element.

This sequence belongs to the fatty acid desaturase type 1 family. Fe(2+) is required as a cofactor. In terms of tissue distribution, highly expressed in the pheromone gland.

It is found in the membrane. The enzyme catalyses an 11,12-saturated fatty acyl-CoA + 2 Fe(II)-[cytochrome b5] + O2 + 2 H(+) = an (11Z)-Delta(11)-fatty acyl-CoA + 2 Fe(III)-[cytochrome b5] + 2 H2O. It carries out the reaction (11Z)-hexadecenoyl-CoA + AH2 + O2 = (10E,12Z)-hexadecadienoyl-CoA + A + 2 H2O. Its function is as follows. Fatty acid desaturase that catalyzes 2 consecutive steps in the biosynthesis of bombykol, a sex pheromone produced by the moth. First acts as an acyl-CoA Delta(11) desaturase (1) by catalyzing the formation of Delta(11) fatty acyl precursors. Then acts as a (11Z)-hexadec-11-enoyl-CoA conjugase (2) by converting a single cis double bond at position 11 of (11Z)-hexadec-11-enoyl-CoA into conjugated 10 trans and 12 cis double bonds. The chain is (11Z)-hexadec-11-enoyl-CoA conjugase from Bombyx mori (Silk moth).